The chain runs to 265 residues: Hydroxyethylthiazole kinase (265 aa).

Met50 provides a ligand contact to substrate. ATP-binding residues include Arg125 and Thr171. A substrate-binding site is contributed by Gly198.

This sequence belongs to the Thz kinase family. The cofactor is Mg(2+).

The catalysed reaction is 5-(2-hydroxyethyl)-4-methylthiazole + ATP = 4-methyl-5-(2-phosphooxyethyl)-thiazole + ADP + H(+). Its pathway is cofactor biosynthesis; thiamine diphosphate biosynthesis; 4-methyl-5-(2-phosphoethyl)-thiazole from 5-(2-hydroxyethyl)-4-methylthiazole: step 1/1. Catalyzes the phosphorylation of the hydroxyl group of 4-methyl-5-beta-hydroxyethylthiazole (THZ). The polypeptide is Hydroxyethylthiazole kinase (Salmonella typhimurium (strain LT2 / SGSC1412 / ATCC 700720)).